The primary structure comprises 676 residues: MENDQFTEKQQQVTTSPTQDNQGQSKAEPVPVSQPLSPTNQTSAQPEMATCDISEELNRQLEDIIKTYGSAASLVEKEGTTAETDKPEKEDVGSMEDAECEDVNEESEKDKPAPGDASRAKEPSASKEQKLEKKILKGLGKEATLLMQSLNKLTTPEEKLDLLFKKYAELLEEHRAEQKQLKYLQKRQAQITKEKDQLQSEHSRAILARSKLESLCRELQRHNKTLKEETIQRAREEDEKRKEITNHFQGTLSEIQAQIEQQSERNMKLCQENTELAEKLKSIIDQYELREEHLDKIFKHRELQQKLVDAKLEQSQEMMKEAEERHQKEKEYLLNQAAEWKLQAKMLKEQETVLQAQITLYSERFEEFQKTLTKSNEVFATFKQEMEKMTKKMKKLEKDTATWKSRFENCNRALLDMIEEKAMRTKEYECFVLKIQRLENLCRALQEERNELYRKIKQAQLPEEVNGNDILEEDDDANTNPSSSEQASIELCAADKNMLQELAEAFRVSHKAEETLPSDGSNPETCNVQMCEAISVPELPSHLTSQPEAGNHCEQFSMSTSAPPEHMPAATENMTTLIENMPKPTKSMPMPPEMVPTPTESVPIPTEGVPTPPKIMPATPESVPTLMQNTSAPLGNMPASTKSTPKAVEHVDDIAELFIPDQPAEQKGDTDMEAVD.

Disordered stretches follow at residues 1–55 and 71–131; these read MEND…DISE and AASL…EQKL. 2 stretches are compositionally biased toward polar residues: residues 8–25 and 34–45; these read EKQQQVTTSPTQDNQGQS and QPLSPTNQTSAQ. The segment covering 75–92 has biased composition (basic and acidic residues); the sequence is VEKEGTTAETDKPEKEDV. Over residues 93–105 the composition is skewed to acidic residues; that stretch reads GSMEDAECEDVNE. Residues 106-131 are compositionally biased toward basic and acidic residues; sequence ESEKDKPAPGDASRAKEPSASKEQKL. A coiled-coil region spans residues 157–461; that stretch reads EEKLDLLFKK…LYRKIKQAQL (305 aa). Positions 464 to 486 are disordered; sequence EVNGNDILEEDDDANTNPSSSEQ.

The protein belongs to the taxilin family. Specifically expressed in skeletal and cardiac muscle.

It localises to the cytoplasm. Functionally, promotes neurite-outgrowth. May be involved in intracellular vesicle traffic. The polypeptide is Beta-taxilin (TXLNB) (Gallus gallus (Chicken)).